Consider the following 768-residue polypeptide: DNA replication licensing factor MCM3 homolog 3 (768 aa).

Residues 290–497 (TFDLLGNSLA…IDRQISEHVA (208 aa)) enclose the MCM domain. 340 to 347 (GDPSVAKS) serves as a coordination point for ATP. The Arginine finger motif lies at 472-475 (SRFD). Residues 661–670 (EMKQQADHDA) are compositionally biased toward basic and acidic residues. The interval 661–690 (EMKQQADHDAGATGGTVDGHGSSGNDPMDV) is disordered. Residues 672–682 (ATGGTVDGHGS) show a composition bias toward gly residues.

This sequence belongs to the MCM family.

The protein localises to the nucleus. It catalyses the reaction ATP + H2O = ADP + phosphate + H(+). Functionally, acts as a factor that allows the DNA to undergo a single round of replication per cell cycle. Required for DNA replication and cell proliferation. May act as a component of the MCM complex which is the putative replicative helicase of the replication licensing system in eukaryotic cells. This chain is DNA replication licensing factor MCM3 homolog 3 (ROA3), found in Zea mays (Maize).